The sequence spans 450 residues: MEIINSRYKMTDTVLGKGGFSEVFLGTDMYTDNKVAIKKINITGKNSSDIKFLNKLDFEIRTMQILNHPNIVAYYDVMKTENYWYIVMEYCNFGTLNDVIKFNKNKGISSLDLEKNTHYYLNQLRDALNYIINMGYIHRDIKPMNILLTKSISENNENNENTNYDRSNSLILKLADFGLTKKCSENEEDIMNTICGSPLYMAPELFFNQHYNSQSDIWSFGIIMYQLLFHDHPINATNYSQLKNGLKNQKINFPKNNMFSNYCFDLLSKTLAKDPKNRLNWSELFHHYWFIHWSEQHCPKNKSDDSNNKKIPDKSQFNEILSSTKSPLISLRQFGQLGQSNLSKFKNNGAINCSIDFPKYTNNFPSAVNQSIKIGLSGSSSPINIPVRNNSSKKINYDDIELISNGNIFPETLYGSISPVDSIINKETRNKTNNPSSLNLSEFVLSDYEI.

Residues 9–290 (KMTDTVLGKG…WSELFHHYWF (282 aa)) form the Protein kinase domain. Residues 15–23 (LGKGGFSEV) and Lys38 contribute to the ATP site. The Proton acceptor role is filled by Asp140.

The protein belongs to the protein kinase superfamily. Ser/Thr protein kinase family.

It catalyses the reaction L-seryl-[protein] + ATP = O-phospho-L-seryl-[protein] + ADP + H(+). The catalysed reaction is L-threonyl-[protein] + ATP = O-phospho-L-threonyl-[protein] + ADP + H(+). This Acanthamoeba polyphaga mimivirus (APMV) protein is Putative serine/threonine-protein kinase R517/R518.